Here is a 203-residue protein sequence, read N- to C-terminus: Large ribosomal subunit protein eL15 (203 aa).

Residues 166 to 203 (ATGKKSRGINKGHRYNNTRSGRRHTWKRQNTQSYWRYR) are disordered. The segment covering 169 to 192 (KKSRGINKGHRYNNTRSGRRHTWK) has biased composition (basic residues). Residues 193-203 (RQNTQSYWRYR) are compositionally biased toward polar residues.

Belongs to the eukaryotic ribosomal protein eL15 family.

The sequence is that of Large ribosomal subunit protein eL15 (rpl15) from Aspergillus niger.